A 122-amino-acid chain; its full sequence is Large ribosomal subunit protein uL14 (122 aa).

The protein belongs to the universal ribosomal protein uL14 family. Part of the 50S ribosomal subunit. Forms a cluster with proteins L3 and L19. In the 70S ribosome, L14 and L19 interact and together make contacts with the 16S rRNA in bridges B5 and B8.

Functionally, binds to 23S rRNA. Forms part of two intersubunit bridges in the 70S ribosome. This is Large ribosomal subunit protein uL14 from Rhizobium johnstonii (strain DSM 114642 / LMG 32736 / 3841) (Rhizobium leguminosarum bv. viciae).